The following is a 222-amino-acid chain: MSHLVKMENGQSQTIQEMLGCIERYNPDHLKTLEAYVQDQAKNNTYDLEANLAVLKLYQFNPHMLNFDITYTILLKCLTNLPHTDFVMAKCLLLPQQMKDENVQTIIDLADILERADFTLFWQRAEVNRNMFRHITGFHDSIRKFVSHVIGTTFQTIRKDLLKELLGGIEDSTLESWVKRNGWKHQGQGLVVVATQDDKIKTKNITEKIEFENVGALMAQCL.

The region spanning 46–208 (YDLEANLAVL…KIKTKNITEK (163 aa)) is the PCI domain.

This sequence belongs to the eIF-3 subunit K family. As to quaternary structure, component of the eukaryotic translation initiation factor 3 (eIF-3) complex. The eIF-3 complex interacts with pix.

It localises to the cytoplasm. Its function is as follows. Component of the eukaryotic translation initiation factor 3 (eIF-3) complex, which is involved in protein synthesis of a specialized repertoire of mRNAs and, together with other initiation factors, stimulates binding of mRNA and methionyl-tRNAi to the 40S ribosome. The eIF-3 complex specifically targets and initiates translation of a subset of mRNAs involved in cell proliferation. This is Eukaryotic translation initiation factor 3 subunit K from Drosophila ananassae (Fruit fly).